A 358-amino-acid polypeptide reads, in one-letter code: Fructose-bisphosphate aldolase 3, cytoplasmic (358 aa).

Residue R39 coordinates substrate. E183 functions as the Proton acceptor in the catalytic mechanism. K225 (schiff-base intermediate with dihydroxyacetone-P) is an active-site residue. Residues 266-268 and R298 each bind substrate; that span reads SGG.

This sequence belongs to the class I fructose-bisphosphate aldolase family. As to quaternary structure, homotetramer.

The protein resides in the cytoplasm. The protein localises to the cytosol. The enzyme catalyses beta-D-fructose 1,6-bisphosphate = D-glyceraldehyde 3-phosphate + dihydroxyacetone phosphate. Its pathway is carbohydrate degradation; glycolysis; D-glyceraldehyde 3-phosphate and glycerone phosphate from D-glucose: step 4/4. In terms of biological role, fructose-bisphosphate aldolase that plays a key role in glycolysis and gluconeogenesis. This is Fructose-bisphosphate aldolase 3, cytoplasmic from Oryza sativa subsp. japonica (Rice).